Consider the following 119-residue polypeptide: uncharacterized protein (119 aa).

Its subcellular location is the mitochondrion. This is an uncharacterized protein from Arabidopsis thaliana (Mouse-ear cress).